We begin with the raw amino-acid sequence, 757 residues long: RNA-directed RNA polymerase catalytic subunit (757 aa).

A disordered region spans residues 50 to 81; it reads SEKGKWTTNTETGAPQLNPIDGPLPEDNEPSG. Positions 55-64 are enriched in polar residues; the sequence is WTTNTETGAP. Short sequence motifs (nuclear localization signal) lie at residues 187-195 and 203-216; these read RKRRVRDNM and RTIG…NKRS. Residues 249 to 256 are promoter-binding site; sequence RGFVYFVE. Residues 286 to 483 enclose the RdRp catalytic domain; that stretch reads VRKMMTNSQD…GINMSKKKSY (198 aa).

The protein belongs to the influenza viruses polymerase PB1 family. As to quaternary structure, influenza RNA polymerase is composed of three subunits: PB1, PB2 and PA. Interacts (via N-terminus) with PA (via C-terminus). Interacts (via C-terminus) with PB2 (via N-terminus); this interaction is essential for transcription initiation. Post-translationally, phosphorylated by host PRKCA.

Its subcellular location is the host nucleus. It localises to the host cytoplasm. The enzyme catalyses RNA(n) + a ribonucleoside 5'-triphosphate = RNA(n+1) + diphosphate. In terms of biological role, RNA-dependent RNA polymerase which is responsible for replication and transcription of virus RNA segments. The transcription of viral mRNAs occurs by a unique mechanism called cap-snatching. 5' methylated caps of cellular mRNAs are cleaved after 10-13 nucleotides by PA. In turn, these short capped RNAs are used as primers by PB1 for transcription of viral mRNAs. During virus replication, PB1 initiates RNA synthesis and copy vRNA into complementary RNA (cRNA) which in turn serves as a template for the production of more vRNAs. This Influenza A virus (strain A/Swine/Colorado/1/1977 H3N2) protein is RNA-directed RNA polymerase catalytic subunit.